Consider the following 502-residue polypeptide: Mannitol 2-dehydrogenase (502 aa).

NAD(+) is bound at residue 37 to 48 (IVHIGVGGFHRA).

This sequence belongs to the mannitol dehydrogenase family. As to quaternary structure, monomer.

The enzyme catalyses D-mannitol + NAD(+) = D-fructose + NADH + H(+). In terms of biological role, catalyzes the NAD(H)-dependent interconversion of D-fructose and D-mannitol in the mannitol metabolic pathway. This chain is Mannitol 2-dehydrogenase, found in Neosartorya fischeri (strain ATCC 1020 / DSM 3700 / CBS 544.65 / FGSC A1164 / JCM 1740 / NRRL 181 / WB 181) (Aspergillus fischerianus).